The chain runs to 432 residues: Adenylosuccinate synthetase (432 aa).

GTP contacts are provided by residues 13–19 and 41–43; these read GDEGKGK and GHT. Asp-14 functions as the Proton acceptor in the catalytic mechanism. Asp-14 and Gly-41 together coordinate Mg(2+). IMP-binding positions include 14–17, 39–42, Thr-130, Arg-144, Gln-225, Thr-240, and Arg-304; these read DEGK and NAGH. The Proton donor role is filled by His-42. 300–306 contributes to the substrate binding site; sequence ATTGRRR. Residues Arg-306, 332-334, and 415-417 contribute to the GTP site; these read KLD and STG.

Belongs to the adenylosuccinate synthetase family. Homodimer. Requires Mg(2+) as cofactor.

Its subcellular location is the cytoplasm. It carries out the reaction IMP + L-aspartate + GTP = N(6)-(1,2-dicarboxyethyl)-AMP + GDP + phosphate + 2 H(+). Its pathway is purine metabolism; AMP biosynthesis via de novo pathway; AMP from IMP: step 1/2. In terms of biological role, plays an important role in the de novo pathway of purine nucleotide biosynthesis. Catalyzes the first committed step in the biosynthesis of AMP from IMP. In Pectobacterium atrosepticum (strain SCRI 1043 / ATCC BAA-672) (Erwinia carotovora subsp. atroseptica), this protein is Adenylosuccinate synthetase.